The following is a 226-amino-acid chain: Thymidylate kinase (226 aa).

16–23 serves as a coordination point for ATP; sequence GIDGAGKT.

Belongs to the thymidylate kinase family.

The catalysed reaction is dTMP + ATP = dTDP + ADP. In terms of biological role, phosphorylation of dTMP to form dTDP in both de novo and salvage pathways of dTTP synthesis. This Xanthomonas euvesicatoria pv. vesicatoria (strain 85-10) (Xanthomonas campestris pv. vesicatoria) protein is Thymidylate kinase.